An 847-amino-acid chain; its full sequence is Follistatin-related protein 5 (847 aa).

The signal sequence occupies residues 1–20 (MFKCWSVVLVLGFIFLESEG). Residues 83 to 135 (GQAECACMDLCKRHYKPVCGSDGEFYENHCEVHRAACLKKQKITIVHNEDCFF) enclose the Kazal-like domain. Disulfide bonds link Cys-89/Cys-119, Cys-93/Cys-112, and Cys-101/Cys-133. EF-hand domains lie at 175–210 (RKKL…EELG) and 211–246 (KDLF…QVIQ). Ca(2+) contacts are provided by Asp-188, Asp-190, Asn-192, Glu-199, Asp-226, Asn-228, Asp-230, His-232, and Glu-237. 2 Ig-like domains span residues 250–337 (PEDQ…IFQV) and 341–426 (PVIR…EDIS). 2 disulfides stabilise this stretch: Cys-270–Cys-321 and Cys-362–Cys-413. Asn-318 and Asn-394 each carry an N-linked (GlcNAc...) asparagine glycan.

The protein resides in the secreted. The polypeptide is Follistatin-related protein 5 (FSTL5) (Homo sapiens (Human)).